The following is a 227-amino-acid chain: MAYPFQLGLQDATSPIMEELMNFHDHTLMIVFLISSLVLYIISLMLTTKLTHTSTMDAQEVETIWTILPAVILILIALPSLRILYMMDEINNPVLTVKTMGHQWYWSYEYTDYEDLCFDSYMIPTNDLKPGELRLLEVDNRVVLPMELPIRMLISSEDVLHSWAVPSLGLKTDAIPGRLNQATVTSNRPGLFYGQCSEICGSNHSFMPIVLEMVPLKNFENWSTSMI.

Over 1 to 14 (MAYPFQLGLQDATS) the chain is Mitochondrial intermembrane. A helical transmembrane segment spans residues 15–45 (PIMEELMNFHDHTLMIVFLISSLVLYIISLM). The Mitochondrial matrix segment spans residues 46–59 (LTTKLTHTSTMDAQ). The chain crosses the membrane as a helical span at residues 60 to 87 (EVETIWTILPAVILILIALPSLRILYMM). Topologically, residues 88–227 (DEINNPVLTV…NFENWSTSMI (140 aa)) are mitochondrial intermembrane. Positions 161, 196, 198, 200, 204, and 207 each coordinate Cu cation. Residue glutamate 198 participates in Mg(2+) binding.

This sequence belongs to the cytochrome c oxidase subunit 2 family. As to quaternary structure, component of the cytochrome c oxidase (complex IV, CIV), a multisubunit enzyme composed of 14 subunits. The complex is composed of a catalytic core of 3 subunits MT-CO1, MT-CO2 and MT-CO3, encoded in the mitochondrial DNA, and 11 supernumerary subunits COX4I, COX5A, COX5B, COX6A, COX6B, COX6C, COX7A, COX7B, COX7C, COX8 and NDUFA4, which are encoded in the nuclear genome. The complex exists as a monomer or a dimer and forms supercomplexes (SCs) in the inner mitochondrial membrane with NADH-ubiquinone oxidoreductase (complex I, CI) and ubiquinol-cytochrome c oxidoreductase (cytochrome b-c1 complex, complex III, CIII), resulting in different assemblies (supercomplex SCI(1)III(2)IV(1) and megacomplex MCI(2)III(2)IV(2)). Found in a complex with TMEM177, COA6, COX18, COX20, SCO1 and SCO2. Interacts with TMEM177 in a COX20-dependent manner. Interacts with COX20. Interacts with COX16. Requires Cu cation as cofactor.

The protein resides in the mitochondrion inner membrane. The enzyme catalyses 4 Fe(II)-[cytochrome c] + O2 + 8 H(+)(in) = 4 Fe(III)-[cytochrome c] + 2 H2O + 4 H(+)(out). In terms of biological role, component of the cytochrome c oxidase, the last enzyme in the mitochondrial electron transport chain which drives oxidative phosphorylation. The respiratory chain contains 3 multisubunit complexes succinate dehydrogenase (complex II, CII), ubiquinol-cytochrome c oxidoreductase (cytochrome b-c1 complex, complex III, CIII) and cytochrome c oxidase (complex IV, CIV), that cooperate to transfer electrons derived from NADH and succinate to molecular oxygen, creating an electrochemical gradient over the inner membrane that drives transmembrane transport and the ATP synthase. Cytochrome c oxidase is the component of the respiratory chain that catalyzes the reduction of oxygen to water. Electrons originating from reduced cytochrome c in the intermembrane space (IMS) are transferred via the dinuclear copper A center (CU(A)) of subunit 2 and heme A of subunit 1 to the active site in subunit 1, a binuclear center (BNC) formed by heme A3 and copper B (CU(B)). The BNC reduces molecular oxygen to 2 water molecules using 4 electrons from cytochrome c in the IMS and 4 protons from the mitochondrial matrix. In Apodemus mystacinus (Broad-toothed field mouse), this protein is Cytochrome c oxidase subunit 2 (MT-CO2).